Reading from the N-terminus, the 273-residue chain is Phosphatidylglycerol--prolipoprotein diacylglyceryl transferase (273 aa).

Helical transmembrane passes span 21-41 (VSIRWYGLMYLVGFMFALWLA), 60-80 (LLFAGFLGVVIGGRVGYVIFY), 95-115 (VWTGGMSFHGGLLGVITAMFW), 124-144 (FFGVADFVAPLVPFGLGMGRM), 176-196 (SQLYEMLLEGVVLFFILNWFI), 203-223 (GSVSGLFLAGYGTFRFLVEFV), and 237-257 (ISMGQILSMPMIVLGILMMVW). Arg143 is a binding site for a 1,2-diacyl-sn-glycero-3-phospho-(1'-sn-glycerol).

Belongs to the Lgt family.

The protein resides in the cell inner membrane. It catalyses the reaction L-cysteinyl-[prolipoprotein] + a 1,2-diacyl-sn-glycero-3-phospho-(1'-sn-glycerol) = an S-1,2-diacyl-sn-glyceryl-L-cysteinyl-[prolipoprotein] + sn-glycerol 1-phosphate + H(+). It functions in the pathway protein modification; lipoprotein biosynthesis (diacylglyceryl transfer). Functionally, catalyzes the transfer of the diacylglyceryl group from phosphatidylglycerol to the sulfhydryl group of the N-terminal cysteine of a prolipoprotein, the first step in the formation of mature lipoproteins. The sequence is that of Phosphatidylglycerol--prolipoprotein diacylglyceryl transferase from Vibrio parahaemolyticus serotype O3:K6 (strain RIMD 2210633).